We begin with the raw amino-acid sequence, 150 residues long: Avidin-related protein 6 (150 aa).

The first 24 residues, 1-24 (MVHATSPLLLLLLLSLALVAPGLS), serve as a signal peptide directing secretion. In terms of domain architecture, Avidin-like spans 26 to 147 (RKCSLTGEWD…GYNNFTRQRT (122 aa)). Cysteine 28 and cysteine 105 are joined by a disulfide. 2 residues coordinate biotin: asparagine 36 and serine 40. N-linked (GlcNAc...) asparagine glycosylation occurs at asparagine 54. Biotin-binding residues include tyrosine 57, threonine 59, and aspartate 63. The N-linked (GlcNAc...) asparagine glycan is linked to asparagine 93. 3 residues coordinate biotin: serine 95, serine 99, and asparagine 140. N-linked (GlcNAc...) asparagine glycosylation is present at asparagine 141.

Belongs to the avidin/streptavidin family. In terms of assembly, homotetramer. Glycosylated.

The protein localises to the secreted. Its function is as follows. Forms a strong non-covalent specific complex with biotin. This chain is Avidin-related protein 6 (AVR6), found in Gallus gallus (Chicken).